We begin with the raw amino-acid sequence, 265 residues long: Hydroxyethylthiazole kinase (265 aa).

Substrate is bound at residue Met-44. 2 residues coordinate ATP: Lys-120 and Ser-166. Position 193 (Gly-193) interacts with substrate.

Belongs to the Thz kinase family. Requires Mg(2+) as cofactor.

It catalyses the reaction 5-(2-hydroxyethyl)-4-methylthiazole + ATP = 4-methyl-5-(2-phosphooxyethyl)-thiazole + ADP + H(+). It functions in the pathway cofactor biosynthesis; thiamine diphosphate biosynthesis; 4-methyl-5-(2-phosphoethyl)-thiazole from 5-(2-hydroxyethyl)-4-methylthiazole: step 1/1. Its function is as follows. Catalyzes the phosphorylation of the hydroxyl group of 4-methyl-5-beta-hydroxyethylthiazole (THZ). The chain is Hydroxyethylthiazole kinase from Methanosphaerula palustris (strain ATCC BAA-1556 / DSM 19958 / E1-9c).